A 180-amino-acid chain; its full sequence is Large ribosomal subunit protein uL5 (180 aa).

The protein belongs to the universal ribosomal protein uL5 family. Part of the 50S ribosomal subunit; part of the 5S rRNA/L5/L18/L25 subcomplex. Contacts the 5S rRNA and the P site tRNA. Forms a bridge to the 30S subunit in the 70S ribosome.

Its function is as follows. This is one of the proteins that bind and probably mediate the attachment of the 5S RNA into the large ribosomal subunit, where it forms part of the central protuberance. In the 70S ribosome it contacts protein S13 of the 30S subunit (bridge B1b), connecting the 2 subunits; this bridge is implicated in subunit movement. Contacts the P site tRNA; the 5S rRNA and some of its associated proteins might help stabilize positioning of ribosome-bound tRNAs. In Chlamydia abortus (strain DSM 27085 / S26/3) (Chlamydophila abortus), this protein is Large ribosomal subunit protein uL5.